The following is a 497-amino-acid chain: Glutamyl-tRNA(Gln) amidotransferase subunit A (497 aa).

Residues lysine 75 and serine 150 each act as charge relay system in the active site. Residue serine 174 is the Acyl-ester intermediate of the active site.

It belongs to the amidase family. GatA subfamily. Heterotrimer of A, B and C subunits.

It catalyses the reaction L-glutamyl-tRNA(Gln) + L-glutamine + ATP + H2O = L-glutaminyl-tRNA(Gln) + L-glutamate + ADP + phosphate + H(+). Its function is as follows. Allows the formation of correctly charged Gln-tRNA(Gln) through the transamidation of misacylated Glu-tRNA(Gln) in organisms which lack glutaminyl-tRNA synthetase. The reaction takes place in the presence of glutamine and ATP through an activated gamma-phospho-Glu-tRNA(Gln). The protein is Glutamyl-tRNA(Gln) amidotransferase subunit A of Paraburkholderia phymatum (strain DSM 17167 / CIP 108236 / LMG 21445 / STM815) (Burkholderia phymatum).